We begin with the raw amino-acid sequence, 306 residues long: Galactosylgalactosylxylosylprotein 3-beta-glucuronosyltransferase I (306 aa).

Over 1–11 (MSEVRIRPRQV) the chain is Cytoplasmic. Residues 12-29 (LILIIVFLVVLMMVHRNG) traverse the membrane as a helical; Signal-anchor for type II membrane protein segment. Over 30–306 (KRTCQGPEYL…GQRSDGGMEV (277 aa)) the chain is Lumenal. Residue Asn90 is glycosylated (N-linked (GlcNAc...) asparagine). Asp163 lines the Mn(2+) pocket. The Proton acceptor role is filled by Glu252.

Belongs to the glycosyltransferase 43 family. It depends on Mn(2+) as a cofactor.

The protein localises to the golgi apparatus membrane. It carries out the reaction 3-O-(beta-D-galactosyl-(1-&gt;3)-beta-D-galactosyl-(1-&gt;4)-beta-D-xylosyl)-L-seryl-[protein] + UDP-alpha-D-glucuronate = 3-O-(beta-D-GlcA-(1-&gt;3)-beta-D-Gal-(1-&gt;3)-beta-D-Gal-(1-&gt;4)-beta-D-Xyl)-L-seryl-[protein] + UDP + H(+). Its pathway is protein modification; protein glycosylation. Functionally, involved in the biosynthesis of L2/HNK-1 carbohydrate epitope on both glycolipids and glycoproteins. Shows strict specificity for Gal-beta-1,3-Gal-beta-1,4-Xyl, exhibiting negligible incorporation into other galactoside substrates. This Drosophila melanogaster (Fruit fly) protein is Galactosylgalactosylxylosylprotein 3-beta-glucuronosyltransferase I (GlcAT-I).